The sequence spans 177 residues: 3-hydroxydecanoyl-[acyl-carrier-protein] dehydratase (177 aa).

Residue histidine 76 is part of the active site.

This sequence belongs to the thioester dehydratase family. FabA subfamily. Homodimer.

The protein resides in the cytoplasm. It catalyses the reaction a (3R)-hydroxyacyl-[ACP] = a (2E)-enoyl-[ACP] + H2O. The enzyme catalyses (3R)-hydroxydecanoyl-[ACP] = (2E)-decenoyl-[ACP] + H2O. The catalysed reaction is (2E)-decenoyl-[ACP] = (3Z)-decenoyl-[ACP]. It functions in the pathway lipid metabolism; fatty acid biosynthesis. Its function is as follows. Necessary for the introduction of cis unsaturation into fatty acids. Catalyzes the dehydration of (3R)-3-hydroxydecanoyl-ACP to E-(2)-decenoyl-ACP and then its isomerization to Z-(3)-decenoyl-ACP. Can catalyze the dehydratase reaction for beta-hydroxyacyl-ACPs with saturated chain lengths up to 16:0, being most active on intermediate chain length. The protein is 3-hydroxydecanoyl-[acyl-carrier-protein] dehydratase of Actinobacillus succinogenes (strain ATCC 55618 / DSM 22257 / CCUG 43843 / 130Z).